The primary structure comprises 211 residues: Claudin-13 (211 aa).

Residues 1-8 (MVVSKQEA) are Cytoplasmic-facing. The chain crosses the membrane as a helical span at residues 9–29 (ISFSVTSLGWVGAIVSCVLPV). Over 30-80 (WRVTFPDDETDPDATIWEGLWHICQVRENRWIQCTLYDTRILVAQDIKVSR) the chain is Extracellular. Residues 81–101 (VFMVICTIGTWLGLLLCVLGD) traverse the membrane as a helical segment. The Cytoplasmic portion of the chain corresponds to 102–118 (WRINCFMNFTIEENLLK). A helical membrane pass occupies residues 119-139 (VAGGMFLSVGLLMLVPLSWVT). Topologically, residues 140–165 (HNIIHGFFNPLLGFSKKVQMGSSLSL) are extracellular. Residues 166–186 (AWTSSLLLLLGGILLCVNIPV) form a helical membrane-spanning segment. Residues 187–211 (CRDFPRCIETPSARPSGANNDTLDV) lie on the Cytoplasmic side of the membrane.

Belongs to the claudin family.

It is found in the cell junction. The protein localises to the tight junction. It localises to the cell membrane. Plays a major role in tight junction-specific obliteration of the intercellular space, through calcium-independent cell-adhesion activity. In Mus musculus (Mouse), this protein is Claudin-13 (Cldn13).